A 159-amino-acid polypeptide reads, in one-letter code: Large ribosomal subunit protein uL15 (159 aa).

The span at 1 to 11 (MKLNELRDNEG) shows a compositional bias: basic and acidic residues. Residues 1-40 (MKLNELRDNEGARYQSKRLGRGIGSGKGKTSGKGVKGQTS) form a disordered region. The span at 21 to 35 (RGIGSGKGKTSGKGV) shows a compositional bias: gly residues.

The protein belongs to the universal ribosomal protein uL15 family. In terms of assembly, part of the 50S ribosomal subunit.

In terms of biological role, binds to the 23S rRNA. This is Large ribosomal subunit protein uL15 from Paramagnetospirillum magneticum (strain ATCC 700264 / AMB-1) (Magnetospirillum magneticum).